Here is a 225-residue protein sequence, read N- to C-terminus: Large ribosomal subunit protein bL25 (225 aa).

The interval 197 to 225 (PQREEQMEDTDTAAADEEGDKEEDADKQE) is disordered. Acidic residues predominate over residues 202–225 (QMEDTDTAAADEEGDKEEDADKQE).

It belongs to the bacterial ribosomal protein bL25 family. CTC subfamily. As to quaternary structure, part of the 50S ribosomal subunit; part of the 5S rRNA/L5/L18/L25 subcomplex. Contacts the 5S rRNA. Binds to the 5S rRNA independently of L5 and L18.

In terms of biological role, this is one of the proteins that binds to the 5S RNA in the ribosome where it forms part of the central protuberance. This Dichelobacter nodosus (strain VCS1703A) protein is Large ribosomal subunit protein bL25.